The primary structure comprises 277 residues: Phosphoenolpyruvate synthase regulatory protein (277 aa).

157–164 lines the ADP pocket; the sequence is GVSRCGKT.

It belongs to the pyruvate, phosphate/water dikinase regulatory protein family. PSRP subfamily.

It catalyses the reaction [pyruvate, water dikinase] + ADP = [pyruvate, water dikinase]-phosphate + AMP + H(+). The enzyme catalyses [pyruvate, water dikinase]-phosphate + phosphate + H(+) = [pyruvate, water dikinase] + diphosphate. Bifunctional serine/threonine kinase and phosphorylase involved in the regulation of the phosphoenolpyruvate synthase (PEPS) by catalyzing its phosphorylation/dephosphorylation. The protein is Phosphoenolpyruvate synthase regulatory protein of Escherichia coli O17:K52:H18 (strain UMN026 / ExPEC).